A 396-amino-acid polypeptide reads, in one-letter code: Cysteine desulfurase (396 aa).

Residues 71–72 (GT), Asn-148, Gln-176, and 196–198 (SGH) contribute to the pyridoxal 5'-phosphate site. The residue at position 199 (Lys-199) is an N6-(pyridoxal phosphate)lysine. Thr-231 is a pyridoxal 5'-phosphate binding site. Residue Cys-319 is the Cysteine persulfide intermediate of the active site. Cys-319 serves as a coordination point for [2Fe-2S] cluster.

The protein belongs to the class-V pyridoxal-phosphate-dependent aminotransferase family. NifS/IscS subfamily. In terms of assembly, homodimer. Pyridoxal 5'-phosphate serves as cofactor.

The catalysed reaction is (sulfur carrier)-H + L-cysteine = (sulfur carrier)-SH + L-alanine. Catalyzes the removal of elemental sulfur atoms from cysteine to produce alanine. Seems to participate in the biosynthesis of the nitrogenase metalloclusters by providing the inorganic sulfur required for the Fe-S core formation. This is Cysteine desulfurase from Azotobacter chroococcum mcd 1.